We begin with the raw amino-acid sequence, 35 residues long: Putative gene 58 protein (35 aa).

This is Putative gene 58 protein (58) from Bacillus phage SP01 (Bacteriophage SP01).